We begin with the raw amino-acid sequence, 566 residues long: Mucolipin-2 (566 aa).

Over Met-1–Lys-65 the chain is Cytoplasmic. A helical transmembrane segment spans residues Leu-66–Ser-86. Over Asn-87–Gln-288 the chain is Extracellular. Residues Lys-107 to Thr-123 form an extracellular/lumenal pore loop region. 2 disulfide bridges follow: Cys-164/Cys-190 and Cys-243/Cys-274. A helical membrane pass occupies residues Tyr-289–Thr-309. The Cytoplasmic portion of the chain corresponds to Arg-310–Trp-346. The chain crosses the membrane as a helical span at residues Tyr-347 to Ile-367. The Extracellular segment spans residues Lys-368–Asp-376. A helical membrane pass occupies residues Leu-377 to Leu-397. Over Gly-398–Arg-419 the chain is Cytoplasmic. Residues Phe-420–Gly-440 form a helical membrane-spanning segment. The Extracellular portion of the chain corresponds to Pro-441–Asn-448. An intramembrane region (pore-forming) is located at residues Leu-449–Phe-469. Residues Asn-461 to Asp-464 carry the Selectivity filter motif. Topologically, residues Ala-470–Trp-480 are extracellular. The helical transmembrane segment at Leu-481–Phe-502 threads the bilayer. At Ile-503–Ser-566 the chain is on the cytoplasmic side.

Belongs to the transient receptor (TC 1.A.4) family. Polycystin subfamily. MCOLN2 sub-subfamily. As to quaternary structure, forms homooligomeric complexes; probably tetrameric. Can heterooligomerize with MCOLN1; heteromeric assemblies have different channel properties as compared to the respective homooligomers and may be tissue-specific. Interacts with TMEM176A.

The protein resides in the cell membrane. The protein localises to the late endosome membrane. Its subcellular location is the lysosome membrane. It is found in the recycling endosome membrane. It carries out the reaction Ca(2+)(in) = Ca(2+)(out). The catalysed reaction is Fe(2+)(in) = Fe(2+)(out). Its activity is regulated as follows. Channel activity is reduced by low extracellular/lumenal pH level. Its function is as follows. Nonselective cation channel probably playing a role in the regulation of membrane trafficking events. Acts as a Ca(2+)-permeable cation channel with inwardly rectifying activity. May activate ARF6 and be involved in the trafficking of GPI-anchored cargo proteins to the cell surface via the ARF6-regulated recycling pathway. May play a role in immune processes. In adaptive immunity, TRPML2 and TRPML1 may play redundant roles in the function of the specialized lysosomes of B cells. In the innate immune response, may play a role in the regulation of chemokine secretion and macrophage migration. Through a possible and probably tissue-specific heteromerization with MCOLN1 may be at least in part involved in many lysosome-dependent cellular events. Also functions as a Fe(2+) permeable channel. The sequence is that of Mucolipin-2 from Homo sapiens (Human).